The sequence spans 274 residues: WIMGHMVNGLEQVSEFLNLGANAIEFDIDFDQNGVAKITHHGIPCDCGRLCTKQTVFTEYLDNIRHVTTPGDPKFREQLILLALDLKLQRIPVEKAYAAGVDVATKLLDHYWQRGKSKARAYILLNLPLVQDYEFIRAFKDTLKNEGYEQHNDKVGVNFTGNEDLDETRKVLKKVGVDKHVWQADGITSCFARGTDRLTEALKRRDTPGYNYAYKVYAWTLVKYSTMRRLFRLGVDGVMSNFPDRVVEVLKEEEFADKFRMATYDDNPWKKFTG.

The active site involves H5. Mg(2+)-binding residues include E25 and D27. The active-site Nucleophile is the H41. Disulfide bonds link C45/C51 and C47/C190. D85 is a Mg(2+) binding site.

It belongs to the arthropod phospholipase D family. Class II subfamily. Requires Mg(2+) as cofactor. Expressed by the venom gland.

Its subcellular location is the secreted. The catalysed reaction is an N-(acyl)-sphingosylphosphocholine = an N-(acyl)-sphingosyl-1,3-cyclic phosphate + choline. It catalyses the reaction an N-(acyl)-sphingosylphosphoethanolamine = an N-(acyl)-sphingosyl-1,3-cyclic phosphate + ethanolamine. The enzyme catalyses a 1-acyl-sn-glycero-3-phosphocholine = a 1-acyl-sn-glycero-2,3-cyclic phosphate + choline. It carries out the reaction a 1-acyl-sn-glycero-3-phosphoethanolamine = a 1-acyl-sn-glycero-2,3-cyclic phosphate + ethanolamine. In terms of biological role, dermonecrotic toxins cleave the phosphodiester linkage between the phosphate and headgroup of certain phospholipids (sphingolipid and lysolipid substrates), forming an alcohol (often choline) and a cyclic phosphate. This toxin acts on sphingomyelin (SM). It may also act on ceramide phosphoethanolamine (CPE), lysophosphatidylcholine (LPC) and lysophosphatidylethanolamine (LPE), but not on lysophosphatidylserine (LPS), and lysophosphatidylglycerol (LPG). It acts by transphosphatidylation, releasing exclusively cyclic phosphate products as second products. Induces dermonecrosis, hemolysis, increased vascular permeability, edema, inflammatory response, and platelet aggregation. The polypeptide is Dermonecrotic toxin SdSicTox-betaIIB2ii (Sicarius cf. damarensis (strain GJB-2008) (Six-eyed sand spider)).